Here is a 298-residue protein sequence, read N- to C-terminus: FH protein interacting protein FIP2 (298 aa).

Residues 9 to 80 enclose the BTB domain; that stretch reads SMVRLNIGGK…LRDGVIPSLS (72 aa). Pentapeptide repeat domains are found at residues 129–165, 166–203, 216–255, and 256–295; these read ERVR…FFSR, TNLQ…GALL, ACLV…NLKG, and AKLS…NMTG.

As to quaternary structure, interacts with FH1. In terms of tissue distribution, expressed in all tissues but preferentially in roots and flowers.

The protein operates within protein modification; protein ubiquitination. May act as a substrate-specific adapter of an E3 ubiquitin-protein ligase complex (CUL3-RBX1-BTB) which mediates the ubiquitination and subsequent proteasomal degradation of target proteins. This chain is FH protein interacting protein FIP2 (FIP2), found in Arabidopsis thaliana (Mouse-ear cress).